Consider the following 58-residue polypeptide: Ribulose bisphosphate carboxylase large chain (58 aa).

A propeptide spanning residues 1 to 2 (MS) is cleaved from the precursor. An N-acetylproline modification is found at Pro3. Lys14 carries the N6,N6,N6-trimethyllysine modification.

It belongs to the RuBisCO large chain family. Type I subfamily. In terms of assembly, heterohexadecamer of 8 large chains and 8 small chains.

Its subcellular location is the plastid. The protein localises to the chloroplast. It carries out the reaction 2 (2R)-3-phosphoglycerate + 2 H(+) = D-ribulose 1,5-bisphosphate + CO2 + H2O. The enzyme catalyses D-ribulose 1,5-bisphosphate + O2 = 2-phosphoglycolate + (2R)-3-phosphoglycerate + 2 H(+). Functionally, ruBisCO catalyzes two reactions: the carboxylation of D-ribulose 1,5-bisphosphate, the primary event in carbon dioxide fixation, as well as the oxidative fragmentation of the pentose substrate in the photorespiration process. Both reactions occur simultaneously and in competition at the same active site. The sequence is that of Ribulose bisphosphate carboxylase large chain (rbcL) from Weinmannia silvicola (Towai).